Reading from the N-terminus, the 44-residue chain is Large ribosomal subunit protein bL34 (44 aa).

The protein belongs to the bacterial ribosomal protein bL34 family.

The sequence is that of Large ribosomal subunit protein bL34 from Neorickettsia sennetsu (strain ATCC VR-367 / Miyayama) (Ehrlichia sennetsu).